Consider the following 729-residue polypeptide: Neurochondrin (729 aa).

At Ser-2 the chain carries N-acetylserine. Position 2 is a phosphoserine (Ser-2). Residues Cys-3 and Cys-4 are each lipidated (S-palmitoyl cysteine). Arg-75 is subject to Asymmetric dimethylarginine. Ser-448 is modified (phosphoserine).

The protein belongs to the neurochondrin family. As to quaternary structure, interacts with MCHR1. Interacts with SEMA4C. Interacts with DIAPH1 (via FH3 domain). Interacts with GRM5. Palmitoylated. Palmitoylation by ZDHHC1, ZDHHC3 and ZDHHC11 regulates the association of NCDN with endosome membranes. May also be palmitoylated by ZDHHC7. Expressed in the neuronal, chondral and bone tissues. Expressed in dendrites. Enriched in the brain in the surface layer I-IV. In brains, protein level increases in male but decreases in female with advancing age (at protein level). In adult brains, it is highly expressed in the forebrain and hindbrain. Highly expressed in the hippocampus, piriform cortex, septum, amygdaloid complex, medial geniculate nucleus, inferior colliculus, cerebellar nuclei and the nuclei of the Vth, VIIth, and XIIth cranial nerves. In bone tissues, it is expressed in osteoblasts and osteocytes.

The protein resides in the cytoplasm. Its subcellular location is the cytosol. It is found in the endosome membrane. The protein localises to the cell projection. It localises to the dendrite. The protein resides in the postsynapse. Probably involved in signal transduction, in the nervous system, via increasing cell surface localization of GRM5 and positively regulating its signaling. Required for the spatial learning process. Acts as a negative regulator of Ca(2+)-calmodulin-dependent protein kinase 2 (CaMK2) phosphorylation. May play a role in modulating melanin-concentrating hormone-mediated functions via its interaction with MCHR1 that interferes with G protein-coupled signal transduction. May be involved in bone metabolism. May also be involved in neurite outgrowth. The chain is Neurochondrin (Ncdn) from Mus musculus (Mouse).